The sequence spans 424 residues: Serine hydroxymethyltransferase 2 (424 aa).

(6S)-5,6,7,8-tetrahydrofolate contacts are provided by residues Leu-125 and 129–131 (GHL). Residue Lys-234 is modified to N6-(pyridoxal phosphate)lysine. Glu-250 is a binding site for (6S)-5,6,7,8-tetrahydrofolate.

This sequence belongs to the SHMT family. As to quaternary structure, homodimer. The cofactor is pyridoxal 5'-phosphate.

Its subcellular location is the cytoplasm. The enzyme catalyses (6R)-5,10-methylene-5,6,7,8-tetrahydrofolate + glycine + H2O = (6S)-5,6,7,8-tetrahydrofolate + L-serine. The protein operates within one-carbon metabolism; tetrahydrofolate interconversion. Its pathway is amino-acid biosynthesis; glycine biosynthesis; glycine from L-serine: step 1/1. Its function is as follows. Catalyzes the reversible interconversion of serine and glycine with tetrahydrofolate (THF) serving as the one-carbon carrier. This reaction serves as the major source of one-carbon groups required for the biosynthesis of purines, thymidylate, methionine, and other important biomolecules. Also exhibits THF-independent aldolase activity toward beta-hydroxyamino acids, producing glycine and aldehydes, via a retro-aldol mechanism. This Cupriavidus pinatubonensis (strain JMP 134 / LMG 1197) (Cupriavidus necator (strain JMP 134)) protein is Serine hydroxymethyltransferase 2.